Consider the following 388-residue polypeptide: Dual-specificity RNA methyltransferase RlmN (388 aa).

Glu109 acts as the Proton acceptor in catalysis. The 240-residue stretch at 115-354 folds into the Radical SAM core domain; that stretch reads EDDRATLCVS…TIVRKTRGDD (240 aa). A disulfide bridge connects residues Cys122 and Cys359. [4Fe-4S] cluster-binding residues include Cys129, Cys133, and Cys136. S-adenosyl-L-methionine-binding positions include 183-184, Ser215, 237-239, and Asn316; these read GE and SLH. Cys359 (S-methylcysteine intermediate) is an active-site residue.

It belongs to the radical SAM superfamily. RlmN family. The cofactor is [4Fe-4S] cluster.

It localises to the cytoplasm. The catalysed reaction is adenosine(2503) in 23S rRNA + 2 reduced [2Fe-2S]-[ferredoxin] + 2 S-adenosyl-L-methionine = 2-methyladenosine(2503) in 23S rRNA + 5'-deoxyadenosine + L-methionine + 2 oxidized [2Fe-2S]-[ferredoxin] + S-adenosyl-L-homocysteine. The enzyme catalyses adenosine(37) in tRNA + 2 reduced [2Fe-2S]-[ferredoxin] + 2 S-adenosyl-L-methionine = 2-methyladenosine(37) in tRNA + 5'-deoxyadenosine + L-methionine + 2 oxidized [2Fe-2S]-[ferredoxin] + S-adenosyl-L-homocysteine. Functionally, specifically methylates position 2 of adenine 2503 in 23S rRNA and position 2 of adenine 37 in tRNAs. m2A2503 modification seems to play a crucial role in the proofreading step occurring at the peptidyl transferase center and thus would serve to optimize ribosomal fidelity. This chain is Dual-specificity RNA methyltransferase RlmN, found in Salmonella typhimurium (strain LT2 / SGSC1412 / ATCC 700720).